The following is a 281-amino-acid chain: Fructose-bisphosphate aldolase class 1 (281 aa).

Lys191 (schiff-base intermediate with dihydroxyacetone-P) is an active-site residue.

This sequence belongs to the DeoC/FbaB aldolase family. As to quaternary structure, homooctamer.

It is found in the cytoplasm. The catalysed reaction is beta-D-fructose 1,6-bisphosphate = D-glyceraldehyde 3-phosphate + dihydroxyacetone phosphate. Its activity is regulated as follows. Activated by citrate. The chain is Fructose-bisphosphate aldolase class 1 (fba) from Pyrococcus abyssi (strain GE5 / Orsay).